Here is a 38-residue protein sequence, read N- to C-terminus: Large ribosomal subunit protein bL36 (38 aa).

It belongs to the bacterial ribosomal protein bL36 family.

This Pseudothermotoga lettingae (strain ATCC BAA-301 / DSM 14385 / NBRC 107922 / TMO) (Thermotoga lettingae) protein is Large ribosomal subunit protein bL36.